The primary structure comprises 256 residues: (E)-benzylidenesuccinyl-CoA hydratase (256 aa).

The Nucleophile role is filled by E110. E130 (proton acceptor) is an active-site residue.

Belongs to the enoyl-CoA hydratase/isomerase family. In terms of assembly, homotrimer.

The catalysed reaction is (2S)-[(R)-hydroxy(phenyl)methyl]succinyl-CoA = (E)-2-benzylidenesuccinyl-CoA + H2O. It functions in the pathway xenobiotic degradation; toluene degradation. Its function is as follows. Involved in an anaerobic toluene degradation pathway. Catalyzes the hydration of (E)-2-benzylidenesuccinyl-CoA to the corresponding alcohol intermediate, 2-(alpha-hydroxybenzyl)succinyl-CoA. Also accepts the N-acetylcysteamine (NAC) thioester of (E)-benzylidenesuccinate. This chain is (E)-benzylidenesuccinyl-CoA hydratase, found in Thauera aromatica.